Reading from the N-terminus, the 213-residue chain is MGRNKKKKRDGDDRRPRLVLSFDEEKRREYLTGFHKRKVERKKAAIEEIKQRLKEEQRKLREERHQEYLKMLAEREEALEEADELDRLVTAKTESVQYDHPNHTVTATTISDLDLSGARLLGLTPPEGGAGDESEEEASSTEKPTKALPRKSRDPLLSQRISSLTASLHAHSRKKVKRKHPRQAQDSKKPPRATRTSKAQRRRLTGKAQHSRE.

Positions Gly33 to Val96 form a coiled coil. A disordered region spans residues Thr109–Glu213. Residues Ala130–Ser139 are compositionally biased toward acidic residues. The segment covering Ala170–Arg182 has biased composition (basic residues).

It belongs to the RRP17 family. In terms of assembly, interacts with KIAA1191.

The protein resides in the nucleus. It is found in the nucleolus. It localises to the cytoplasm. In terms of biological role, multifunctional RNA binding protein that plays a role in RNA metabolism and DNA maintenance. Participates in the resolution of DNA stress and the maintenance of genome integrity by localizing to sites of DNA insults. Also plays a role in proper nucleolar organization by limiting nucleolar size and regulating nucleolar number. Mechanistically, regulates the nucleolar levels of fibrillarin and nucleolin, two key players in pre-rRNA processing and ribosome assembly. In Pongo abelii (Sumatran orangutan), this protein is Nucleolar protein 12 (NOL12).